We begin with the raw amino-acid sequence, 904 residues long: Protein translocase subunit SecA (904 aa).

ATP contacts are provided by residues Gln-89, 107-111 (GEGKT), and Asp-496. Residues 870 to 904 (GGFQELSSGTPSPTVTVTTSSGGGTERKTSRRRKR) form a disordered region. Over residues 876–889 (SSGTPSPTVTVTTS) the composition is skewed to low complexity.

It belongs to the SecA family. As to quaternary structure, monomer and homodimer. Part of the essential Sec protein translocation apparatus which comprises SecA, SecYEG and auxiliary proteins SecDF. Other proteins may also be involved.

Its subcellular location is the cell inner membrane. The protein localises to the cytoplasm. It catalyses the reaction ATP + H2O + cellular proteinSide 1 = ADP + phosphate + cellular proteinSide 2.. Its function is as follows. Part of the Sec protein translocase complex. Interacts with the SecYEG preprotein conducting channel. Has a central role in coupling the hydrolysis of ATP to the transfer of proteins into and across the cell membrane, serving as an ATP-driven molecular motor driving the stepwise translocation of polypeptide chains across the membrane. The protein is Protein translocase subunit SecA of Leptospira borgpetersenii serovar Hardjo-bovis (strain JB197).